Consider the following 714-residue polypeptide: Polynucleotide 5'-hydroxyl-kinase NOL9 (714 aa).

Alanine 2 carries the N-acetylalanine modification. A Nucleolar localization signal motif is present at residues 31–47 (RRGRRRFGVLTRVELRR). The interval 80–133 (ARSRPAPRSPPTPSVPPAPCTASATCSLLNPRNHSTPQSRAGRPVRKVSPNVTQ) is disordered. Residues 86–98 (PRSPPTPSVPPAP) are compositionally biased toward pro residues. Residues 107 to 118 (LLNPRNHSTPQS) show a composition bias toward polar residues. Phosphoserine is present on serine 128. Residue 322 to 329 (GACDIGKS) participates in ATP binding. The interaction with LAS1L stretch occupies residues 495–714 (FTYEEKESSP…PRHKLRQRRK (220 aa)). A Glycyl lysine isopeptide (Lys-Gly) (interchain with G-Cter in SUMO2) cross-link involves residue lysine 500. Serine 502 is modified (phosphoserine).

The protein belongs to the Clp1 family. NOL9/GRC3 subfamily. As to quaternary structure, interacts with PELP1, WDR18 and SENP3. Interacts with LAS1L to form an ITS2 pre-rRNA endonuclease-kinase complex.

Its subcellular location is the nucleus. It localises to the nucleolus. It catalyses the reaction a 5'-end dephospho-2'-deoxyribonucleoside-DNA + ATP = a 5'-end 5'-phospho-2'-deoxyribonucleoside-DNA + ADP + H(+). It carries out the reaction a 5'-end dephospho-ribonucleoside-RNA + ATP = a 5'-end 5'-phospho-ribonucleoside-RNA + ADP + H(+). Its function is as follows. Polynucleotide kinase that can phosphorylate the 5'-hydroxyl groups of single-stranded and double-stranded RNA and DNA substrates. Involved in rRNA processing and its kinase activity is required for the processing of the 32S precursor into 5.8S and 28S rRNAs, more specifically for the generation of the major 5.8S(S) form. Required for the efficient pre-rRNA processing of internal transcribed spacer 2 (ITS2). Associates with LAS1L to form an ITS2 pre-rRNA endonuclease-kinase complex and is responsible for the transport of this complex into the nucleolus. The chain is Polynucleotide 5'-hydroxyl-kinase NOL9 from Mus musculus (Mouse).